A 102-amino-acid polypeptide reads, in one-letter code: Caroteno-chlorophyll a-c-binding protein (102 aa).

Residues Glu36 and His39 each contribute to the chlorophyll a site. The helical transmembrane segment at 78 to 98 (VLGLIKIVPAGLWGIMIFYAA) threads the bilayer.

Belongs to the light-harvesting chlorophyll a/b-binding (LHC) protein family. As to quaternary structure, the LHC complex consists of chlorophyll a-b binding proteins. Binds at least 14 chlorophylls (8 Chl-a and 6 Chl-b) and carotenoids such as lutein and neoxanthin. serves as cofactor. Post-translationally, photoregulated by reversible phosphorylation of its threonine residues.

It is found in the plastid. Its subcellular location is the chloroplast thylakoid membrane. Its function is as follows. The light-harvesting complex (LHC) functions as a light receptor, it captures and delivers excitation energy to photosystems with which it is closely associated. This Amphidinium carterae (Dinoflagellate) protein is Caroteno-chlorophyll a-c-binding protein.